Here is a 350-residue protein sequence, read N- to C-terminus: TATA box-binding protein-like 2 (350 aa).

The disordered stretch occupies residues 82–150 (ENRDQTVTGN…QPSPETPNSN (69 aa)). Basic and acidic residues predominate over residues 94–116 (ASEESCRTRDRQSQLQLPDEHGS). Composition is skewed to polar residues over residues 118-128 (LNLNSNSSPDP) and 139-150 (SNQPSPETPNSN).

It belongs to the TBP family. As to quaternary structure, interacts with TAF3. In terms of tissue distribution, expressed in myotubes and myofibers (at protein level). Expressed in a wide variety of tissues with highest levels in heart, lung, liver, uterus and placenta and especially the gonads. Expression is higher in the ovary than the testis, and within the ovary expression is localized to the oocytes.

The protein resides in the cytoplasm. Its subcellular location is the nucleus. Functionally, transcription factor required in complex with TAF3 for the differentiation of myoblasts into myocytes. The complex replaces TFIID at specific promoters at an early stage in the differentiation process. The polypeptide is TATA box-binding protein-like 2 (Mus musculus (Mouse)).